A 193-amino-acid chain; its full sequence is nitroreductase FRM2 (193 aa).

This sequence belongs to the nitroreductase family. FMN is required as a cofactor.

It is found in the cytoplasm. The protein localises to the nucleus. It catalyses the reaction 4-(hydroxyamino)quinoline N-oxide + 2 NAD(+) + H2O = 4-nitroquinoline N-oxide + 2 NADH + 2 H(+). Type II nitroreductase, able to reduce 4-nitroquinoline N-oxide (4-NQO) into 4-aminoquinoline-N-oxide (4-AQO) via 4-hydroxyaminoquinoline (4-HAQO), using NADH as reductant. involved in the oxidative stress response. Plays a possible role in the metal stress response. Involved in negative regulation of fatty acid metabolism. The sequence is that of nitroreductase FRM2 from Saccharomyces cerevisiae (strain ATCC 204508 / S288c) (Baker's yeast).